Here is a 459-residue protein sequence, read N- to C-terminus: Protein U54 (459 aa).

An N-terminal signal peptide occupies residues 1–20; that stretch reads MQPATLQWSSYVLQLRLTTA. N-linked (GlcNAc...) asparagine; by host glycosylation is found at N76, N100, N281, N321, and N452.

It belongs to the herpesviridae UL82 family.

In Homo sapiens (Human), this protein is Protein U54 (U54).